The following is an 86-amino-acid chain: Cell division topological specificity factor (86 aa).

The protein belongs to the MinE family.

Functionally, prevents the cell division inhibition by proteins MinC and MinD at internal division sites while permitting inhibition at polar sites. This ensures cell division at the proper site by restricting the formation of a division septum at the midpoint of the long axis of the cell. This Shewanella halifaxensis (strain HAW-EB4) protein is Cell division topological specificity factor.